The primary structure comprises 695 residues: Nicastrin (695 aa).

A signal peptide spans 1–22; sequence MEMRLNAASIWLLILSYGATIA. Residues 23-654 lie on the Extracellular side of the membrane; it reads QGERTRDKMY…IFLRPSNVHQ (632 aa). Asparagine 45, asparagine 108, asparagine 116, asparagine 138, asparagine 381, asparagine 461, asparagine 489, asparagine 585, and asparagine 609 each carry an N-linked (GlcNAc...) asparagine glycan. A helical transmembrane segment spans residues 655–675; the sequence is VTTLSVGIVVLIISFCLVYII. Residues 676–695 lie on the Cytoplasmic side of the membrane; that stretch reads SSRSEVLFEDLPASNAALFG.

This sequence belongs to the nicastrin family. In terms of assembly, component of the gamma-secretase complex, a complex composed of a presenilin (Psn) homodimer, nicastrin (Nct), Aph-1 and Pen-2.

The protein localises to the membrane. Functionally, essential subunit of the gamma-secretase complex, an endoprotease complex that catalyzes the intramembrane cleavage of integral membrane proteins such as Notch. It probably represents a stabilizing cofactor required for the assembly of the gamma-secretase complex. In Drosophila melanogaster (Fruit fly), this protein is Nicastrin.